The chain runs to 642 residues: MPVITLPDGSKREFAHAVSTLDVAADIGPGLAKACIAGRVNGELKDACDLIETDAELSIITAKDEEGVEILRHSCAHLLGHAIKQMWPETKMAIGPVIDNGFYYDIDLEHKLTQDDIEALEKRMLQLAKTNYDVVKRVVSWQEARDTFAARGEEYKIAILDENISKDATPALYHHEEYTDMCRGPHVPNMRFCQHFKLMSIAGAYWRGNSENKMLQRIYGTAWADKKALSTHLTRLEEAAKRDHRKIGKQLDLYHMQEEAPGMVFWHNDGWSIFLELERFIRRKLNQYTYQEVKGPLMMDRVLWERSGHWDKYSEAMFTTSSENREYAIKPMNCPGHVQIFNQGLKSYRDLPLRMAEFGCCHRNEPSGSLHGLMRVRGFTQDDAHIFCTDDQVQEEVSACIQMVYDTYSTFGFENIVVKLSTRPEKRIGDDAMWDRAEEALKQALRANNIEFTLLPGEGAFYGPKIEFTLHDCLDRAWQCGTVQLDYALPSRLGATYVAEDNSRQTPVMIHRAILGSLERFLGILIEEYAGRFPTWLAPMQVVVMNITDKQADYVQEIVKFFKEQGIRASFDLRNEKIGFKIREHTLRRVPYLLVVGDQEMENKEVAVRTRDGIDLGKMRLEDFATKIHQQISLRSLKLLEE.

Residues Met1–Thr61 form the TGS domain. The tract at residues Asp243–Pro534 is catalytic. Zn(2+) is bound by residues Cys334, His385, and His511.

Belongs to the class-II aminoacyl-tRNA synthetase family. As to quaternary structure, homodimer. The cofactor is Zn(2+).

It is found in the cytoplasm. It carries out the reaction tRNA(Thr) + L-threonine + ATP = L-threonyl-tRNA(Thr) + AMP + diphosphate + H(+). In terms of biological role, catalyzes the attachment of threonine to tRNA(Thr) in a two-step reaction: L-threonine is first activated by ATP to form Thr-AMP and then transferred to the acceptor end of tRNA(Thr). Also edits incorrectly charged L-seryl-tRNA(Thr). In Shewanella putrefaciens (strain CN-32 / ATCC BAA-453), this protein is Threonine--tRNA ligase.